Reading from the N-terminus, the 350-residue chain is Alcohol dehydrogenase (350 aa).

Zn(2+) is bound at residue Cys46. Residues His47, Thr48, and His51 each coordinate NAD(+). The Zn(2+) site is built by His69, Cys100, Cys103, Cys106, Cys114, and Cys156. Residues Gly183, Gly184, Leu185, and Asp204 each contribute to the NAD(+) site. Thr205 carries the post-translational modification Phosphothreonine. Residues Lys209 and Phe224 each coordinate NAD(+). A Phosphothreonine modification is found at Thr250. NAD(+) contacts are provided by Val271, Met273, Ser296, Val298, and Arg343.

It belongs to the zinc-containing alcohol dehydrogenase family. Homotetramer. The cofactor is Zn(2+).

The protein localises to the cytoplasm. The catalysed reaction is a primary alcohol + NAD(+) = an aldehyde + NADH + H(+). The enzyme catalyses a secondary alcohol + NAD(+) = a ketone + NADH + H(+). It carries out the reaction ethanol + NAD(+) = acetaldehyde + NADH + H(+). Its function is as follows. Reduces acetaldehyde to ethanol during the fermentation of glucose. The sequence is that of Alcohol dehydrogenase (adh1) from Schizosaccharomyces pombe (strain 972 / ATCC 24843) (Fission yeast).